The chain runs to 83 residues: Large ribosomal subunit protein bL27 (83 aa).

Belongs to the bacterial ribosomal protein bL27 family.

The chain is Large ribosomal subunit protein bL27 from Bifidobacterium adolescentis (strain ATCC 15703 / DSM 20083 / NCTC 11814 / E194a).